The chain runs to 357 residues: Ribosomal RNA large subunit methyltransferase F (357 aa).

Polar residues predominate over residues 1–15 (MPKPPRSTQILSCNA). The segment at 1 to 33 (MPKPPRSTQILSCNAPNGKPKTQHPSARAKVKR) is disordered.

It belongs to the methyltransferase superfamily. METTL16/RlmF family.

The protein resides in the cytoplasm. It catalyses the reaction adenosine(1618) in 23S rRNA + S-adenosyl-L-methionine = N(6)-methyladenosine(1618) in 23S rRNA + S-adenosyl-L-homocysteine + H(+). In terms of biological role, specifically methylates the adenine in position 1618 of 23S rRNA. The chain is Ribosomal RNA large subunit methyltransferase F from Shewanella putrefaciens (strain CN-32 / ATCC BAA-453).